Here is a 541-residue protein sequence, read N- to C-terminus: Ascorbate transporter, chloroplastic (541 aa).

The N-terminal 28 residues, 1–28 (MALGGLISNRNFGSFIGSGNGCQRLGKS), are a transit peptide targeting the chloroplast. 11 consecutive transmembrane segments (helical) span residues 133–155 (VIVLLCFSSFLLCNMDRVNMSIA), 170–190 (VGLIQSSFFWGYLLTQILGGI), 199–219 (VVLGFGVVWWSFATIMTPIAA), 221–241 (LGLPFLLVVRAFMGIGEGVAM), 263–283 (LVYSGMYLGSVTGLAFSPMLI), 286–306 (FGWPSVFYSFGSLGSIWFLLW), 352–372 (VWALIISHFCHNWGTFILLTW), 390–410 (LLCVLPWLTMAVFANIGGWIA), 430–450 (IGFLGPAFFLSQLSHVKTPAM), 481–501 (AGVLLGLSNTAGVLAGVFGTA), and 515–535 (VFKVAVALYLIGTLVWNLFAT).

This sequence belongs to the major facilitator superfamily. Sodium/anion cotransporter (TC 2.A.1.14) family. As to expression, expressed in stems, developing siliques, leaf mesophyll cells and sepals of mature flowers. Not detected in roots. Detected in palisade tissue rather than spongy tissue from the leaves.

It localises to the plastid. Its subcellular location is the chloroplast inner membrane. Insensitive to dehydroascorbate, p-isoascorbate, inorganic phosphate, glutamate, ATP, p-aminohippuric acid or tetraethylammonium. Its function is as follows. Inorganic phosphate and probable anion transporter. Ascorbate transporter bridging the chloroplast envelope. Transports ascorbate from the cytosol into the chloroplast. Requires chloride ions and the presence of an electrochemical potential across the membrane for activity. The polypeptide is Ascorbate transporter, chloroplastic (PHT4;4) (Arabidopsis thaliana (Mouse-ear cress)).